The following is a 365-amino-acid chain: Keratin-associated protein 10-6 (365 aa).

A run of 29 repeats spans residues 41–45 (CCEPP), 46–50 (CCAPA), 67–71 (CCPVT), 89–93 (CCQQS), 99–103 (CCASS), 109–113 (CCVPV), 114–118 (CCKTV), 119–123 (CCKPV), 124–128 (CCVSV), 129–133 (CCGDS), 135–139 (CCQQS), 145–149 (CCTSS), 155–159 (CCVPV), 160–164 (CCKPV), 172–176 (CCQQS), 186–190 (CCQAV), 208–212 (CCQQS), 218–222 (CCTSS), 228–232 (CCVPV), 233–237 (CCVPV), 238–242 (CCVPT), 250–254 (CCQQS), 260–264 (CCTSS), 270–274 (CCVPV), 282–286 (CCQQS), 292–296 (CCTAS), 297–301 (CCRSS), 316–320 (CCVPV), and 334–338 (CCRTA). Positions 41–338 (CCEPPCCAPA…SCQPSCCRTA (298 aa)) are 29 X 5 AA repeats of C-C-X(3).

The protein belongs to the KRTAP type 10 family. Interacts with hair keratins. In terms of tissue distribution, restricted to a narrow region of the hair fiber cuticle, lying approximately 20 cell layers above the apex of the dermal papilla of the hair root; not detected in any other tissues.

In terms of biological role, in the hair cortex, hair keratin intermediate filaments are embedded in an interfilamentous matrix, consisting of hair keratin-associated proteins (KRTAP), which are essential for the formation of a rigid and resistant hair shaft through their extensive disulfide bond cross-linking with abundant cysteine residues of hair keratins. The matrix proteins include the high-sulfur and high-glycine-tyrosine keratins. This chain is Keratin-associated protein 10-6 (KRTAP10-6), found in Homo sapiens (Human).